Reading from the N-terminus, the 311-residue chain is Syndecan-1 (311 aa).

The first 22 residues, 1 to 22, serve as a signal peptide directing secretion; that stretch reads MRRAALWLWLCALALRLQPALP. Over 23-255 the chain is Extracellular; the sequence is QIVAVNVPPE…SLLDRKEVLG (233 aa). 2 disordered regions span residues 29-59 and 152-184; these read VPPE…LSRQ and SHPH…VEGG. Residues 32–42 are compositionally biased toward acidic residues; it reads EDQDGSGDDSD. O-linked (Xyl...) (chondroitin sulfate) serine glycosylation is present at Ser37. Residue Asn43 is glycosylated (N-linked (GlcNAc...) asparagine). Residues Ser45 and Ser47 are each glycosylated (O-linked (Xyl...) (heparan sulfate) serine). O-linked (Xyl...) (chondroitin sulfate) serine glycosylation is found at Ser207 and Ser217. Residues 256–276 form a helical membrane-spanning segment; it reads GVIAGGLVGLIFAVCLVAFML. The Cytoplasmic segment spans residues 277-311; it reads YRMKKKDEGSYSLEEPKQANGGAYQKPTKQEEFYA. A disordered region spans residues 285–311; the sequence is GSYSLEEPKQANGGAYQKPTKQEEFYA. Ser286 bears the Phosphoserine mark.

Belongs to the syndecan proteoglycan family. Interacts with CDCP1. Interacts (via C-terminus) with TIAM1 (via PDZ domain). Interacts with MDK. In terms of processing, shedding is enhanced by a number of factors such as heparanase, thrombin or EGF. Also by stress and wound healing. PMA-mediated shedding is inhibited by TIMP3.

The protein resides in the membrane. It localises to the secreted. Its subcellular location is the extracellular exosome. Cell surface proteoglycan that contains both heparan sulfate and chondroitin sulfate and that links the cytoskeleton to the interstitial matrix. Regulates exosome biogenesis in concert with SDCBP and PDCD6IP. Able to induce its own expression in dental mesenchymal cells and also in the neighboring dental epithelial cells via an MSX1-mediated pathway. In Mus musculus (Mouse), this protein is Syndecan-1.